Consider the following 88-residue polypeptide: Protein alpha-1 (88 aa).

The helical transmembrane segment at 38–58 threads the bilayer; that stretch reads GFWIILIILLGILAIRIAIKV.

It is found in the membrane. This Bos taurus (Bovine) protein is Protein alpha-1 (alpha).